A 352-amino-acid polypeptide reads, in one-letter code: MEGISIYTSDNYTEEIGSGDYDSIKEPCFREENAHFNRIFLPTIYSIIFLTGIVGNGLVILVMGYQKKLRSMTDKYRLHLSVADLLFVITLPFWAVDAVANWYFGKFLCKAVHVIYTVNLYSSVLILAFISLDRYLAIVHATNSQRPRKLLAEKVVYVGVWIPALLLTIPDFIFANVSEADDRYICDRFYPNDLWVVVFQFQHIMVGLILPGIVILSCYCIIISKLSHSKGHQKRKALKTTVILILAFFACWLPYYIGISIDSFILLEIIRQGCEFENTVHKWISITEALAFFHCCLNPILYAFLGAKFKTSAQHALTSVSRGSSLKILSKGKRGGHSSVSTESESSSFHSS.

Positions 1–21 (MEGISIYTSDNYTEEIGSGDY) are important for chemokine binding and signaling. Residues 1–38 (MEGISIYTSDNYTEEIGSGDYDSIKEPCFREENAHFNR) are Extracellular-facing. Position 7 is a sulfotyrosine (Tyr7). Asn11 is a glycosylation site (N-linked (GlcNAc...) asparagine). Tyr12 is subject to Sulfotyrosine. O-linked (Xyl...) (chondroitin sulfate) serine glycosylation is present at Ser18. Residue Tyr21 is modified to Sulfotyrosine. Disulfide bonds link Cys28/Cys274 and Cys109/Cys186. A helical membrane pass occupies residues 39–63 (IFLPTIYSIIFLTGIVGNGLVILVM). Residues 64-77 (GYQKKLRSMTDKYR) lie on the Cytoplasmic side of the membrane. Residues 78 to 99 (LHLSVADLLFVITLPFWAVDAV) form a helical membrane-spanning segment. The chemokine binding stretch occupies residues 94–97 (WAVD). Topologically, residues 100–110 (ANWYFGKFLCK) are extracellular. A helical membrane pass occupies residues 111–130 (AVHVIYTVNLYSSVLILAFI). Positions 113 to 117 (HVIYT) are chemokine binding. The Cytoplasmic portion of the chain corresponds to 131–154 (SLDRYLAIVHATNSQRPRKLLAEK). The short motif at 133 to 135 (DRY) is the Important for signaling element. Residues 135–147 (YLAIVHATNSQRP) form an involved in dimerization; when bound to chemokine region. A helical transmembrane segment spans residues 155–174 (VVYVGVWIPALLLTIPDFIF). Residues 175–195 (ANVSEADDRYICDRFYPNDLW) are Extracellular-facing. The chemokine binding, important for signaling stretch occupies residues 186–190 (CDRFY). Residues 191-210 (PNDLWVVVFQFQHIMVGLIL) are involved in dimerization. The chain crosses the membrane as a helical span at residues 196–216 (VVVFQFQHIMVGLILPGIVIL). Residues 217–241 (SCYCIIISKLSHSKGHQKRKALKTT) lie on the Cytoplasmic side of the membrane. Residues 242 to 261 (VILILAFFACWLPYYIGISI) form a helical membrane-spanning segment. Residues 262–282 (DSFILLEIIRQGCEFENTVHK) are Extracellular-facing. Residues 266–268 (LLE) form an involved in dimerization region. The chain crosses the membrane as a helical span at residues 283–302 (WISITEALAFFHCCLNPILY). The Cytoplasmic portion of the chain corresponds to 303–352 (AFLGAKFKTSAQHALTSVSRGSSLKILSKGKRGGHSSVSTESESSSFHSS). 2 positions are modified to phosphoserine: Ser319 and Ser321. Phosphoserine; by PKC and GRK6 occurs at positions 324 and 325. Residues 329-352 (LSKGKRGGHSSVSTESESSSFHSS) form a disordered region. Phosphoserine; by GRK6 is present on Ser330. Residue Lys331 forms a Glycyl lysine isopeptide (Lys-Gly) (interchain with G-Cter in ubiquitin) linkage. The span at 337 to 352 (HSSVSTESESSSFHSS) shows a compositional bias: low complexity. Ser339 bears the Phosphoserine; by GRK6 mark. Phosphoserine occurs at positions 348 and 351.

This sequence belongs to the G-protein coupled receptor 1 family. In terms of assembly, monomer. Can form homodimers. Interacts with CD164. Interacts with ARRB2; the interaction is dependent on the C-terminal phosphorylation of CXCR4 and allows activation of MAPK1 and MAPK3. Interacts with ARR3; the interaction is dependent on the C-terminal phosphorylation of CXCR4 and modulates calcium mobilization. Interacts with RNF113A; the interaction, enhanced by CXCL12, promotes CXCR4 ubiquitination and subsequent degradation. Interacts (via the cytoplasmic C-terminal) with ITCH (via the WW domains I and II); the interaction, enhanced by CXCL12, promotes CXCR4 ubiquitination and leads to its degradation. Interacts with extracellular ubiquitin. Interacts with DBN1; this interaction is enhanced by antigenic stimulation. Following LPS binding, may form a complex with GDF5, HSP90AA1 and HSPA8. In terms of processing, phosphorylated on agonist stimulation. Rapidly phosphorylated on serine and threonine residues in the C-terminal. Phosphorylation at Ser-324 and Ser-325 leads to recruitment of ITCH, ubiquitination and protein degradation. Ubiquitinated after ligand binding, leading to its degradation. Ubiquitinated by ITCH at the cell membrane on agonist stimulation. The ubiquitin-dependent mechanism, endosomal sorting complex required for transport (ESCRT), then targets CXCR4 for lysosomal degradation. This process is dependent also on prior Ser-/Thr-phosphorylation in the C-terminal of CXCR4. Also binding of ARRB1 to STAM negatively regulates CXCR4 sorting to lysosomes though modulating ubiquitination of SFR5S. Post-translationally, sulfation is required for efficient binding of CXCL12/SDF-1alpha and promotes its dimerization. In terms of processing, O- and N-glycosylated. N-glycosylation can mask coreceptor function. The O-glycosylation chondroitin sulfate attachment does not affect interaction with CXCL12/SDF-1alpha nor its coreceptor activity.

It is found in the cell membrane. Its subcellular location is the cell junction. It localises to the early endosome. The protein resides in the late endosome. The protein localises to the lysosome. Its function is as follows. Receptor for the C-X-C chemokine CXCL12/SDF-1 that transduces a signal by increasing intracellular calcium ion levels and enhancing MAPK1/MAPK3 activation. Involved in the AKT signaling cascade. Plays a role in regulation of cell migration, e.g. during wound healing. Acts as a receptor for extracellular ubiquitin; leading to enhanced intracellular calcium ions and reduced cellular cAMP levels. Binds bacterial lipopolysaccharide (LPS) et mediates LPS-induced inflammatory response, including TNF secretion by monocytes. Involved in hematopoiesis and in cardiac ventricular septum formation. Also plays an essential role in vascularization of the gastrointestinal tract, probably by regulating vascular branching and/or remodeling processes in endothelial cells. Involved in cerebellar development. In the CNS, could mediate hippocampal-neuron survival. The sequence is that of C-X-C chemokine receptor type 4 (CXCR4) from Callithrix jacchus (White-tufted-ear marmoset).